The chain runs to 333 residues: Cap-specific mRNA (nucleoside-2'-O-)-methyltransferase (333 aa).

Residue tyrosine 22 participates in mRNA binding. S-adenosyl-L-methionine contacts are provided by glutamine 39, tyrosine 66, glycine 68, glycine 72, aspartate 95, arginine 97, valine 116, and aspartate 138. The tract at residues 169 to 249 is binding to NPH-I; that stretch reads PVASSLKWRC…NKIVRNKVVV (81 aa). Residues 169–333 are binding to Rap94; it reads PVASSLKWRC…NSKRSVRSNK (165 aa). Lysine 175 (for methyltransferase activity) is an active-site residue. Residues 177 to 180, aspartate 182, 205 to 207, and glutamate 233 each bind mRNA; these read RCPF and SAE. Positions 305–333 are disordered; that stretch reads SHEPIQRKISSKNSMSKNRNSKRSVRSNK. A compositionally biased stretch (low complexity) spans 311–322; the sequence is RKISSKNSMSKN. Over residues 323-333 the composition is skewed to basic residues; the sequence is RNSKRSVRSNK.

It belongs to the class I-like SAM-binding methyltransferase superfamily. Poxvirus/kinetoplastid 2'-O-MTase family. In terms of assembly, interacts with poly(A) polymerase catalytic subunit OPG063. Interacts with OPG109 and OPG123; these interactions might help linking transcription to capping and polyadenylation.

It localises to the virion. The enzyme catalyses a 5'-end (N(7)-methyl 5'-triphosphoguanosine)-ribonucleoside in mRNA + S-adenosyl-L-methionine = a 5'-end (N(7)-methyl 5'-triphosphoguanosine)-(2'-O-methyl-ribonucleoside) in mRNA + S-adenosyl-L-homocysteine + H(+). Its function is as follows. Displays methyltransferase, positive regulation of the poly(A) polymerase and transcription elongation activities. Involved in the modification of both mRNA ends and in intermediate and late gene positive transcription elongation. At the mRNAs 5' end, methylates the ribose 2' OH group of the first transcribed nucleotide, thereby producing a 2'-O-methylpurine cap. At the 3' end, functions as a processivity factor which stimulates the activity of the viral poly(A) polymerase OPG063 that creates mRNA's poly(A) tail. In the presence of OPG102, OPG063 does not dissociate from the RNA allowing tail elongation to around 250 adenylates. The protein is Cap-specific mRNA (nucleoside-2'-O-)-methyltransferase (OPG102) of Vaccinia virus (strain Western Reserve) (VACV).